A 736-amino-acid polypeptide reads, in one-letter code: 3',5'-cyclic-AMP phosphodiesterase 4B (736 aa).

Disordered regions lie at residues 51-77 (QLPP…PTTL) and 96-116 (DVEN…SSSS). S56 carries the phosphoserine modification. S290 is modified (phosphoserine). The 330-residue stretch at 330-659 (VNTENEDHLA…NWYQSMIPQS (330 aa)) folds into the PDEase domain. H406 (proton donor) is an active-site residue. 3',5'-cyclic AMP is bound at residue H406. 2 residues coordinate AMP: H406 and H410. Residues H410, H446, D447, and D564 each contribute to the Zn(2+) site. AMP is bound by residues D447, D564, Q615, and F618. D447 is a binding site for Mg(2+). Position 447 (D447) interacts with Mn(2+). Q615 and F618 together coordinate 3',5'-cyclic AMP. Phosphoserine occurs at positions 659 and 661. Residues 685 to 736 (EEEDSEGPEKEGEGPNYFSSTKTLCVIDPENRDSLEETDIDIATEDKSLIDT) form a disordered region.

Belongs to the cyclic nucleotide phosphodiesterase family. PDE4 subfamily. As to quaternary structure, interacts with DISC1. It depends on Zn(2+) as a cofactor. The cofactor is Mg(2+). Mn(2+) serves as cofactor. As to expression, widely expressed. Expressed in brain, heart, lung and liver. In terms of tissue distribution, expressed in liver and brain.

It localises to the cytoplasm. The protein localises to the cell membrane. It catalyses the reaction 3',5'-cyclic AMP + H2O = AMP + H(+). Its pathway is purine metabolism; 3',5'-cyclic AMP degradation; AMP from 3',5'-cyclic AMP: step 1/1. Inhibited by rolipram. Hydrolyzes the second messenger cAMP, which is a key regulator of many important physiological processes. This chain is 3',5'-cyclic-AMP phosphodiesterase 4B, found in Rattus norvegicus (Rat).